Reading from the N-terminus, the 554-residue chain is Acetyl-S-ACP:malonate ACP transferase (554 aa).

The protein localises to the cytoplasm. It catalyses the reaction acetyl-[ACP] + malonate = malonyl-[ACP] + acetate. Its function is as follows. Alpha subunit of the biotin-independent and biotin-dependent malonate decarboxylase multienzyme complex (EC 4.1.1.88 and EC 7.2.4.4, respectively). Acts as an acyl-carrier protein (ACP) transferase component. This first step in malonate decarboxylation involves the exchange of an acetyl thioester residue bound to the activated ACP subunit for a malonyl thioester residue. Has a weak activity with acetyl-CoA as substrate. This Malonomonas rubra protein is Acetyl-S-ACP:malonate ACP transferase (madA).